A 478-amino-acid polypeptide reads, in one-letter code: Sialidase-4 (478 aa).

Residues 22 to 25 (YRVP) carry the FRIP motif motif. Residues Arg-23 and Arg-43 each coordinate substrate. Active-site proton acceptor residues include Asp-47 and Asp-48. One copy of the BNR 1 repeat lies at 127–138 (VTSCDAGLTWGS). Residues Tyr-177 and Tyr-179 each contribute to the substrate site. One copy of the BNR 2 repeat lies at 200–211 (FYSDDHGISWHC). Substrate-binding residues include Glu-222 and Arg-238. Residues 247 to 258 (ALSADEGTSFLP) form a BNR 3 repeat. 2 disordered regions span residues 285–307 (IEPQDDRWTGSPRNTPHSPCFNL) and 335–359 (SRSPENHGLEPGSDGDKTSWTPECP). Residue Arg-383 coordinates substrate. The active-site Nucleophile is Tyr-413. Residue Glu-434 is part of the active site.

Belongs to the glycosyl hydrolase 33 family. In terms of tissue distribution, highly expressed in brain, particularly in hippocampus, and at lower levels in liver and spleen. Expressed in hippocampal neurons (at protein level).

It localises to the cell membrane. Its subcellular location is the endoplasmic reticulum membrane. The protein localises to the microsome membrane. The protein resides in the mitochondrion inner membrane. It is found in the mitochondrion outer membrane. It localises to the cell projection. Its subcellular location is the neuron projection. The protein localises to the lysosome lumen. It carries out the reaction Hydrolysis of alpha-(2-&gt;3)-, alpha-(2-&gt;6)-, alpha-(2-&gt;8)- glycosidic linkages of terminal sialic acid residues in oligosaccharides, glycoproteins, glycolipids, colominic acid and synthetic substrates.. The enzyme catalyses a ganglioside GM3 + H2O = a beta-D-galactosyl-(1-&gt;4)-beta-D-glucosyl-(1&lt;-&gt;1)-ceramide + N-acetylneuraminate. The catalysed reaction is a ganglioside GM3 (d18:1(4E)) + H2O = a beta-D-Gal-(1-&gt;4)-beta-D-Glc-(1&lt;-&gt;1)-Cer(d18:1(4E)) + N-acetylneuraminate. It catalyses the reaction a ganglioside GM2 + H2O = a ganglioside GA2 + N-acetylneuraminate. It carries out the reaction a ganglioside GM2 (d18:1(4E)) + H2O = a ganglioside GA2 (d18:1(4E)) + N-acetylneuraminate. The enzyme catalyses a ganglioside GD1a + H2O = a ganglioside GM1 + N-acetylneuraminate. The catalysed reaction is a ganglioside GD1a (d18:1(4E)) + H2O = a ganglioside GM1 (d18:1(4E)) + N-acetylneuraminate. It catalyses the reaction a ganglioside GD3 + H2O = a ganglioside GM3 + N-acetylneuraminate. It carries out the reaction a ganglioside GD3 (d18:1(4E)) + H2O = a ganglioside GM3 (d18:1(4E)) + N-acetylneuraminate. In terms of biological role, exo-alpha-sialidase that catalyzes the hydrolytic cleavage of the terminal sialic acid (N-acetylneuraminic acid, Neu5Ac) of a glycan moiety in the catabolism of glycolipids, glycoproteins and oligosacharides. Efficiently hydrolyzes gangliosides including alpha-(2-&gt;3)-sialylated GD1a and GM3 and alpha-(2-&gt;8)-sialylated GD3. Hydrolyzes poly-alpha-(2-&gt;8)-sialylated neural cell adhesion molecule NCAM1 likely at growth cones, suppressing neurite outgrowth in hippocampal neurons. May desialylate sialyl Lewis A and X antigens at the cell surface, down-regulating these glycan epitopes recognized by SELE/E selectin in the initiation of cell adhesion and extravasation. Has sialidase activity toward mucin, fetuin and sialyllactose. The protein is Sialidase-4 (Neu4) of Mus musculus (Mouse).